A 228-amino-acid chain; its full sequence is 2,3-bisphosphoglycerate-dependent phosphoglycerate mutase (228 aa).

Substrate-binding positions include arginine 8 to asparagine 15, threonine 21 to glycine 22, arginine 60, glutamate 87 to tyrosine 90, lysine 98, arginine 114 to arginine 115, and glycine 183 to asparagine 184. Histidine 9 functions as the Tele-phosphohistidine intermediate in the catalytic mechanism. Glutamate 87 (proton donor/acceptor) is an active-site residue.

The protein belongs to the phosphoglycerate mutase family. BPG-dependent PGAM subfamily.

The enzyme catalyses (2R)-2-phosphoglycerate = (2R)-3-phosphoglycerate. It participates in carbohydrate degradation; glycolysis; pyruvate from D-glyceraldehyde 3-phosphate: step 3/5. Catalyzes the interconversion of 2-phosphoglycerate and 3-phosphoglycerate. This Staphylococcus aureus (strain Mu3 / ATCC 700698) protein is 2,3-bisphosphoglycerate-dependent phosphoglycerate mutase.